Here is an 894-residue protein sequence, read N- to C-terminus: DNA mismatch repair protein MutS (894 aa).

Position 632 to 639 (632 to 639) interacts with ATP; it reads GPNMGGKS.

It belongs to the DNA mismatch repair MutS family.

In terms of biological role, this protein is involved in the repair of mismatches in DNA. It is possible that it carries out the mismatch recognition step. This protein has a weak ATPase activity. The chain is DNA mismatch repair protein MutS from Paraburkholderia xenovorans (strain LB400).